Here is a 560-residue protein sequence, read N- to C-terminus: DNA ligase B (560 aa).

Residue Lys-124 is the N6-AMP-lysine intermediate of the active site.

It belongs to the NAD-dependent DNA ligase family. LigB subfamily.

The catalysed reaction is NAD(+) + (deoxyribonucleotide)n-3'-hydroxyl + 5'-phospho-(deoxyribonucleotide)m = (deoxyribonucleotide)n+m + AMP + beta-nicotinamide D-nucleotide.. In terms of biological role, catalyzes the formation of phosphodiester linkages between 5'-phosphoryl and 3'-hydroxyl groups in double-stranded DNA using NAD as a coenzyme and as the energy source for the reaction. This is DNA ligase B from Escherichia coli (strain SMS-3-5 / SECEC).